The sequence spans 299 residues: ATP phosphoribosyltransferase (299 aa).

The protein belongs to the ATP phosphoribosyltransferase family. Long subfamily. In terms of assembly, equilibrium between an active dimeric form, an inactive hexameric form and higher aggregates. Interconversion between the various forms is largely reversible and is influenced by the natural substrates and inhibitors of the enzyme. Requires Mg(2+) as cofactor.

The protein localises to the cytoplasm. The enzyme catalyses 1-(5-phospho-beta-D-ribosyl)-ATP + diphosphate = 5-phospho-alpha-D-ribose 1-diphosphate + ATP. Its pathway is amino-acid biosynthesis; L-histidine biosynthesis; L-histidine from 5-phospho-alpha-D-ribose 1-diphosphate: step 1/9. Its activity is regulated as follows. Feedback inhibited by histidine. In terms of biological role, catalyzes the condensation of ATP and 5-phosphoribose 1-diphosphate to form N'-(5'-phosphoribosyl)-ATP (PR-ATP). Has a crucial role in the pathway because the rate of histidine biosynthesis seems to be controlled primarily by regulation of HisG enzymatic activity. This Erwinia tasmaniensis (strain DSM 17950 / CFBP 7177 / CIP 109463 / NCPPB 4357 / Et1/99) protein is ATP phosphoribosyltransferase.